A 315-amino-acid polypeptide reads, in one-letter code: Ribosomal protein L11 methyltransferase (315 aa).

Residues Thr161, Gly182, Asp204, and Asn248 each coordinate S-adenosyl-L-methionine.

It belongs to the methyltransferase superfamily. PrmA family.

It localises to the cytoplasm. It carries out the reaction L-lysyl-[protein] + 3 S-adenosyl-L-methionine = N(6),N(6),N(6)-trimethyl-L-lysyl-[protein] + 3 S-adenosyl-L-homocysteine + 3 H(+). In terms of biological role, methylates ribosomal protein L11. In Shouchella clausii (strain KSM-K16) (Alkalihalobacillus clausii), this protein is Ribosomal protein L11 methyltransferase.